A 291-amino-acid chain; its full sequence is 4-hydroxy-tetrahydrodipicolinate synthase (291 aa).

Residue threonine 42 participates in pyruvate binding. Catalysis depends on tyrosine 129, which acts as the Proton donor/acceptor. Lysine 157 serves as the catalytic Schiff-base intermediate with substrate. Residue isoleucine 198 coordinates pyruvate.

It belongs to the DapA family. As to quaternary structure, homotetramer; dimer of dimers.

The protein localises to the cytoplasm. The enzyme catalyses L-aspartate 4-semialdehyde + pyruvate = (2S,4S)-4-hydroxy-2,3,4,5-tetrahydrodipicolinate + H2O + H(+). It functions in the pathway amino-acid biosynthesis; L-lysine biosynthesis via DAP pathway; (S)-tetrahydrodipicolinate from L-aspartate: step 3/4. Its function is as follows. Catalyzes the condensation of (S)-aspartate-beta-semialdehyde [(S)-ASA] and pyruvate to 4-hydroxy-tetrahydrodipicolinate (HTPA). The chain is 4-hydroxy-tetrahydrodipicolinate synthase from Chlamydia pneumoniae (Chlamydophila pneumoniae).